A 482-amino-acid chain; its full sequence is Islet cell autoantigen 1-like protein (482 aa).

Residues 44–247 (ASDAELDAKL…TARMMSQIHE (204 aa)) form the AH domain. Disordered stretches follow at residues 365 to 393 (TQECQTAFGSPSASLTSQEPSMGSEPLAH) and 427 to 449 (SHTDNQPVPSQSPKKLTRSPNNG). Composition is skewed to polar residues over residues 366–385 (QECQTAFGSPSASLTSQEPS) and 428–449 (HTDNQPVPSQSPKKLTRSPNNG).

The sequence is that of Islet cell autoantigen 1-like protein (ICA1L) from Homo sapiens (Human).